The following is a 108-amino-acid chain: N(4)-acetylcytidine amidohydrolase (108 aa).

The ASCH domain maps to Ile-5–Val-102. The active-site Proton acceptor is the Lys-20. Thr-23 serves as the catalytic Nucleophile. The active-site Proton donor is the Glu-73.

This sequence belongs to the N(4)-acetylcytidine amidohydrolase family.

The catalysed reaction is N(4)-acetylcytidine + H2O = cytidine + acetate + H(+). It catalyses the reaction N(4)-acetyl-2'-deoxycytidine + H2O = 2'-deoxycytidine + acetate + H(+). It carries out the reaction N(4)-acetylcytosine + H2O = cytosine + acetate + H(+). In terms of biological role, catalyzes the hydrolysis of N(4)-acetylcytidine (ac4C). In Moritella marina (Vibrio marinus), this protein is N(4)-acetylcytidine amidohydrolase.